Reading from the N-terminus, the 79-residue chain is MFVELVYDKRNVEGLPGAREIILNELTKRVHQLFPDAQVKVKPMQANALNSDCTKTEKERLHRMLEEMFEEADMWLVAE.

Belongs to the DinI family.

In terms of biological role, affects survival in macrophages. The sequence is that of Virulence protein MsgA (msgA) from Salmonella typhi.